The following is an 81-amino-acid chain: Cytochrome b559 subunit alpha (81 aa).

Residues 21–35 (VIHALTIPALFLAGW) traverse the membrane as a helical segment. Position 23 (histidine 23) interacts with heme.

Belongs to the PsbE/PsbF family. In terms of assembly, heterodimer of an alpha subunit and a beta subunit. PSII is composed of 1 copy each of membrane proteins PsbA, PsbB, PsbC, PsbD, PsbE, PsbF, PsbH, PsbI, PsbJ, PsbK, PsbL, PsbM, PsbT, PsbX, PsbY, PsbZ, Psb30/Ycf12, peripheral proteins PsbO, CyanoQ (PsbQ), PsbU, PsbV and a large number of cofactors. It forms dimeric complexes. Requires heme b as cofactor.

Its subcellular location is the cellular thylakoid membrane. Its function is as follows. This b-type cytochrome is tightly associated with the reaction center of photosystem II (PSII). PSII is a light-driven water:plastoquinone oxidoreductase that uses light energy to abstract electrons from H(2)O, generating O(2) and a proton gradient subsequently used for ATP formation. It consists of a core antenna complex that captures photons, and an electron transfer chain that converts photonic excitation into a charge separation. The chain is Cytochrome b559 subunit alpha from Synechococcus sp. (strain JA-3-3Ab) (Cyanobacteria bacterium Yellowstone A-Prime).